The chain runs to 269 residues: Glutamate racemase (269 aa).

Substrate contacts are provided by residues 14–15 (DS) and 46–47 (YS). Residue Cys78 is the Proton donor/acceptor of the active site. 79–80 (NT) lines the substrate pocket. Residue Cys189 is the Proton donor/acceptor of the active site. 190-191 (TH) contacts substrate.

The protein belongs to the aspartate/glutamate racemases family.

The catalysed reaction is L-glutamate = D-glutamate. It participates in cell wall biogenesis; peptidoglycan biosynthesis. Functionally, provides the (R)-glutamate required for cell wall biosynthesis. The sequence is that of Glutamate racemase from Haemophilus influenzae (strain 86-028NP).